A 35-amino-acid chain; its full sequence is Coenzyme PQQ synthesis protein A (35 aa).

A cross-link (pyrroloquinoline quinone (Glu-Tyr)) is located at residues 16 to 20 (EINMY).

This sequence belongs to the PqqA family.

It participates in cofactor biosynthesis; pyrroloquinoline quinone biosynthesis. In terms of biological role, required for coenzyme pyrroloquinoline quinone (PQQ) biosynthesis. PQQ is probably formed by cross-linking a specific glutamate to a specific tyrosine residue and excising these residues from the peptide. This is Coenzyme PQQ synthesis protein A from Ruegeria pomeroyi (strain ATCC 700808 / DSM 15171 / DSS-3) (Silicibacter pomeroyi).